Here is a 442-residue protein sequence, read N- to C-terminus: Ribosomal protein uS12 methylthiotransferase RimO (442 aa).

The region spanning 8–118 is the MTTase N-terminal domain; sequence PKVGFVSLGC…VLGHVHKYVE (111 aa). Residues Cys17, Cys53, Cys82, Cys150, Cys154, and Cys157 each contribute to the [4Fe-4S] cluster site. The 238-residue stretch at 136 to 373 folds into the Radical SAM core domain; sequence LTPRHYAYLK…MELQQQVSIR (238 aa). The TRAM domain occupies 376 to 442; the sequence is ARKVGKEMLV…EYDLWASLID (67 aa).

This sequence belongs to the methylthiotransferase family. RimO subfamily. [4Fe-4S] cluster serves as cofactor.

It localises to the cytoplasm. The enzyme catalyses L-aspartate(89)-[ribosomal protein uS12]-hydrogen + (sulfur carrier)-SH + AH2 + 2 S-adenosyl-L-methionine = 3-methylsulfanyl-L-aspartate(89)-[ribosomal protein uS12]-hydrogen + (sulfur carrier)-H + 5'-deoxyadenosine + L-methionine + A + S-adenosyl-L-homocysteine + 2 H(+). Functionally, catalyzes the methylthiolation of an aspartic acid residue of ribosomal protein uS12. The protein is Ribosomal protein uS12 methylthiotransferase RimO of Aeromonas hydrophila subsp. hydrophila (strain ATCC 7966 / DSM 30187 / BCRC 13018 / CCUG 14551 / JCM 1027 / KCTC 2358 / NCIMB 9240 / NCTC 8049).